A 344-amino-acid polypeptide reads, in one-letter code: Dihydroorotate dehydrogenase (quinone) (344 aa).

FMN is bound by residues 65–69 and Thr-89; that span reads AGFDK. Lys-69 contributes to the substrate binding site. 114–118 contacts substrate; it reads NRMGF. The FMN site is built by Asn-145 and Asn-178. Residue Asn-178 coordinates substrate. The active-site Nucleophile is the Ser-181. Asn-183 provides a ligand contact to substrate. Lys-215 and Thr-243 together coordinate FMN. Substrate is bound at residue 244–245; it reads NT. FMN contacts are provided by residues Gly-269, Gly-298, and 319-320; that span reads YT.

This sequence belongs to the dihydroorotate dehydrogenase family. Type 2 subfamily. As to quaternary structure, monomer. FMN serves as cofactor.

It localises to the cell membrane. The catalysed reaction is (S)-dihydroorotate + a quinone = orotate + a quinol. It participates in pyrimidine metabolism; UMP biosynthesis via de novo pathway; orotate from (S)-dihydroorotate (quinone route): step 1/1. In terms of biological role, catalyzes the conversion of dihydroorotate to orotate with quinone as electron acceptor. In Clavibacter sepedonicus (Clavibacter michiganensis subsp. sepedonicus), this protein is Dihydroorotate dehydrogenase (quinone).